The following is a 957-amino-acid chain: Glycine dehydrogenase (decarboxylating) (957 aa).

Residue lysine 708 is modified to N6-(pyridoxal phosphate)lysine.

This sequence belongs to the GcvP family. The glycine cleavage system is composed of four proteins: P, T, L and H. It depends on pyridoxal 5'-phosphate as a cofactor.

The catalysed reaction is N(6)-[(R)-lipoyl]-L-lysyl-[glycine-cleavage complex H protein] + glycine + H(+) = N(6)-[(R)-S(8)-aminomethyldihydrolipoyl]-L-lysyl-[glycine-cleavage complex H protein] + CO2. Its function is as follows. The glycine cleavage system catalyzes the degradation of glycine. The P protein binds the alpha-amino group of glycine through its pyridoxal phosphate cofactor; CO(2) is released and the remaining methylamine moiety is then transferred to the lipoamide cofactor of the H protein. The protein is Glycine dehydrogenase (decarboxylating) of Escherichia coli (strain SE11).